Reading from the N-terminus, the 203-residue chain is MAYTLPQLPYAYDALEPNIDAQTMEIHHTKHHQTYINNVNAALEGTEYADLPVEELVSKLKSLPENLQGPVRNNGGGHANHSLFWTVMSPNGGGEPKGEVAKAIDKDIGGFEKFKEAFTKAALSRFGSGWAWLSVTPDKKVVVESTANQDSPLFEGNTPILGLDVWEHAYYLKYQNRRPDYIGAFYNVVNWDEVERRYHAAIA.

Mn(2+) contacts are provided by histidine 27, histidine 81, aspartate 164, and histidine 168.

It belongs to the iron/manganese superoxide dismutase family. Mn(2+) serves as cofactor.

It carries out the reaction 2 superoxide + 2 H(+) = H2O2 + O2. Its function is as follows. Destroys superoxide anion radicals which are normally produced within the cells and which are toxic to biological systems. The chain is Superoxide dismutase [Mn] (sodA) from Xanthomonas campestris pv. campestris (strain 8004).